We begin with the raw amino-acid sequence, 201 residues long: Small ribosomal subunit protein uS4 (201 aa).

The S4 RNA-binding domain occupies 91-155; that stretch reads SRLDNVVYRA…STLPFQVARE (65 aa).

This sequence belongs to the universal ribosomal protein uS4 family. In terms of assembly, part of the 30S ribosomal subunit. Contacts protein S5. The interaction surface between S4 and S5 is involved in control of translational fidelity.

In terms of biological role, one of the primary rRNA binding proteins, it binds directly to 16S rRNA where it nucleates assembly of the body of the 30S subunit. Its function is as follows. With S5 and S12 plays an important role in translational accuracy. This Rhodococcus jostii (strain RHA1) protein is Small ribosomal subunit protein uS4.